Consider the following 667-residue polypeptide: Probable E3 ubiquitin ligase complex SCF subunit sconB (667 aa).

The tract at residues 1 to 55 is disordered; sequence MNGSGSTAKESLFNPTPRKLGLPEDNTMTPYNGVRSIFDNSSGSRQLTDEHTNQE. Residues 182–228 enclose the F-box domain; the sequence is IDFITALPPEISFKILSYLDTASLCRAAQVSRAWKCLADDDVVWHRM. WD repeat units follow at residues 347–386, 388–426, 428–464, 466–507, 549–593, 594–633, and 636–667; these read GHTNGVMCLQFEDNILATGSYDMTIKIWDMETGEELRTLT, HTSGIRCLQFDDTKLISGSIDRTLKVWNWRTGECISTYT, HLGGIIGLHFENSVLASGSIDNTVKIWNFEDKSTFLL, GHSD…RTFQ, RQEP…CLRT, FFGHLEGVWALSADTLRIVSGAEDRMVKIWDPRTGKCERT, and GHSGPVTCVGLGDSCFVTGSEDCEVRIHSFKN. Residues 528 to 562 form a disordered region; sequence DHDAGHEEDSNASVSGDESPLRQEPCSPGASFFEG.

It belongs to the WD repeat MET30/SCONB/SCON-2 family. In terms of assembly, component of the SCF(sconB) E3 ubiquitin ligase complex.

The protein operates within protein modification; protein ubiquitination. In terms of biological role, component of the SCF(sconB) E3 ubiquitin ligase complex involved in the regulation of sulfur metabolite repression, probably by mediating the inactivation or degradation of the metR transcription factor. The protein is Probable E3 ubiquitin ligase complex SCF subunit sconB (sconB) of Talaromyces stipitatus (strain ATCC 10500 / CBS 375.48 / QM 6759 / NRRL 1006) (Penicillium stipitatum).